The chain runs to 235 residues: Small ribosomal subunit protein uS2 (235 aa).

This sequence belongs to the universal ribosomal protein uS2 family.

The polypeptide is Small ribosomal subunit protein uS2 (Thermoanaerobacter pseudethanolicus (strain ATCC 33223 / 39E) (Clostridium thermohydrosulfuricum)).